We begin with the raw amino-acid sequence, 89 residues long: UPF0213 protein LSEI_1587 (89 aa).

The region spanning 4 to 79 is the GIY-YIG domain; that stretch reads KTYYFYVLLC…KHQTRHRKEV (76 aa).

This sequence belongs to the UPF0213 family.

This is UPF0213 protein LSEI_1587 from Lacticaseibacillus paracasei (strain ATCC 334 / BCRC 17002 / CCUG 31169 / CIP 107868 / KCTC 3260 / NRRL B-441) (Lactobacillus paracasei).